The primary structure comprises 793 residues: Pentatricopeptide repeat-containing protein At1g03100, mitochondrial (793 aa).

A mitochondrion-targeting transit peptide spans 1–87 (MFSLRKTKLQ…REAISSISGS (87 aa)). 11 PPR repeats span residues 257–291 (NTQV…GVKA), 292–322 (DANL…IDEA), 330–364 (FWQF…GKVA), 458–492 (TEEI…DSPV), 495–529 (DNSM…GVRT), 530–564 (GSSV…GIQL), 565–599 (DSSC…KILR), 601–631 (GNQK…IREV), 637–671 (GVHD…GHSP), 672–707 (NAQT…AAAT), and 713–747 (DQEL…NMFV).

The protein belongs to the PPR family. P subfamily.

The protein localises to the mitochondrion. The polypeptide is Pentatricopeptide repeat-containing protein At1g03100, mitochondrial (Arabidopsis thaliana (Mouse-ear cress)).